We begin with the raw amino-acid sequence, 375 residues long: Growth/differentiation factor 8 (375 aa).

Positions M1–L23 are cleaved as a signal peptide. A propeptide spanning residues D24–R266 is cleaved from the precursor. N-linked (GlcNAc...) asparagine glycosylation is present at N71. Cystine bridges form between C272/C282, C281/C340, C309/C372, and C313/C374.

The protein belongs to the TGF-beta family. In terms of assembly, homodimer; disulfide-linked.

The protein localises to the secreted. In terms of biological role, acts specifically as a negative regulator of skeletal muscle growth. This Excalfactoria chinensis (Blue-breasted quail) protein is Growth/differentiation factor 8 (MSTN).